The following is a 455-amino-acid chain: MSKPQQQSPPSTTTTSPPPPPPSTPPPASSSRSLLSALRRSPVTTLVAAFFLLALFMYGEDVRTLAELSIDDYLYPDADFYNVSALPPLLLPPPTCDLSRGRWVFDNTSLPAYREKECTFLTKQVSCLANGRPDDLWQYWRWQPNNCSLPTFDARRFMEKMRGKRMMFVGDSLNRNQWESLVCLVQPILSKGRKKIVKRGSFNIFYAKEYRATLEFYWAPFLVESNSDNPNFHHIDQRIISPERIESHANNWKDVDYLIFNTYIWWMNNEDIKVRRPNSTSWSDHDEVPRIETYGRVFKTWSTWLEQNVDPARTSVFFMTISPLHNSPAQWGNPNGIKCVKETLPVLNYTKPLDLNHDMRMYDLVAKVAKNMKNVPVSLIDITRMSDYRKDAHTSLYSIRQGKLLTPEQKADPQKYADCIHWCLPGVPDVWNQILYTRILSKSSPPSTHPSLPPQ.

The span at 1–15 (MSKPQQQSPPSTTTT) shows a compositional bias: low complexity. The tract at residues 1-32 (MSKPQQQSPPSTTTTSPPPPPPSTPPPASSSR) is disordered. Residues 1–42 (MSKPQQQSPPSTTTTSPPPPPPSTPPPASSSRSLLSALRRSP) lie on the Cytoplasmic side of the membrane. Over residues 16 to 28 (SPPPPPPSTPPPA) the composition is skewed to pro residues. Residues 43 to 59 (VTTLVAAFFLLALFMYG) traverse the membrane as a helical; Signal-anchor for type II membrane protein segment. The Lumenal portion of the chain corresponds to 60-455 (EDVRTLAELS…PSTHPSLPPQ (396 aa)). Residues Asn82, Asn107, and Asn146 are each glycosylated (N-linked (GlcNAc...) asparagine). 4 cysteine pairs are disulfide-bonded: Cys96-Cys147, Cys118-Cys183, Cys127-Cys423, and Cys339-Cys419. Residues 170–172 (GDS) carry the GDS motif motif. The active-site Nucleophile is Ser172. Asn278 and Asn348 each carry an N-linked (GlcNAc...) asparagine glycan. Residue Asp418 is the Proton donor of the active site. Positions 418-421 (DCIH) match the DXXH motif motif. Catalysis depends on His421, which acts as the Proton acceptor.

The protein belongs to the PC-esterase family. TBL subfamily. In terms of tissue distribution, highly expressed in leaves. Expressed in roots, stems and inflorescences.

Its subcellular location is the golgi apparatus membrane. In terms of biological role, xylan acetyltransferase required for 2-O- and 3-O-monoacetylation of xylosyl residues in xylan. Catalyzes the 2-O-acetylation of xylan, followed by nonenzymatic acetyl migration to the O-3 position, resulting in products that are monoacetylated at both O-2 and O-3 positions. The protein is Xylan O-acetyltransferase 3 of Oryza sativa subsp. japonica (Rice).